The sequence spans 172 residues: Transcriptional repressor NrdR (172 aa).

A zinc finger lies at 3 to 34; that stretch reads CPFCGEADTKVIDSRLVAEGDQVRRRRECLSC. Residues 49 to 139 enclose the ATP-cone domain; sequence PRVVKQDGTR…VYRSFQDINE (91 aa).

Belongs to the NrdR family. It depends on Zn(2+) as a cofactor.

Functionally, negatively regulates transcription of bacterial ribonucleotide reductase nrd genes and operons by binding to NrdR-boxes. The polypeptide is Transcriptional repressor NrdR (Marinobacter nauticus (strain ATCC 700491 / DSM 11845 / VT8) (Marinobacter aquaeolei)).